The sequence spans 302 residues: Acetylxylan esterase (302 aa).

Positions 1-20 are cleaved as a signal peptide; it reads MPSVKETLTLLLSQAFLATG. The propeptide occupies 21–31; that stretch reads SPVDGETVVKR. Glutamine 32 carries the pyrrolidone carboxylic acid modification. A glycan (N-linked (GlcNAc...) asparagine) is linked at asparagine 94. Serine 121 is an active-site residue. The tract at residues 236–273 is disordered; the sequence is QLSSGGSQPPGGGPTSTSRPTSTRTGSSPGPTQTHWGQ. Residues 244–266 form a linker region; sequence PPGGGPTSTSRPTSTRTGSSPGP. Residues 250–269 are compositionally biased toward low complexity; it reads TSTSRPTSTRTGSSPGPTQT. The CBM1 domain maps to 266-302; that stretch reads PTQTHWGQCGGQGWTGPTQCESGTTCQVISQWYSQCL. 2 disulfides stabilise this stretch: cysteine 274–cysteine 291 and cysteine 285–cysteine 301.

It belongs to the cutinase family. Acetylxylan esterase subfamily. Monomer. Post-translationally, glycosylated.

The protein localises to the secreted. The catalysed reaction is Deacetylation of xylans and xylo-oligosaccharides.. It participates in glycan degradation; xylan degradation. Inhibited by phenylmethylsulfonyl flouride. In terms of biological role, degrades acetylated xylans by cleaving acetyl side groups from the hetero-xylan backbone. This is Acetylxylan esterase (axe1) from Hypocrea jecorina (Trichoderma reesei).